The primary structure comprises 126 residues: uncharacterized protein (126 aa).

Residues 1–101 (MQASSEPANV…KSVGSQSADE (101 aa)) are disordered. Composition is skewed to polar residues over residues 14 to 27 (GQNQ…STSP) and 86 to 99 (DTEA…SQSA).

This is an uncharacterized protein from Schizosaccharomyces pombe (strain 972 / ATCC 24843) (Fission yeast).